The primary structure comprises 440 residues: Tol-Pal system protein TolB (440 aa).

Residues 1–28 (MVMTRRIFFSWFIVICSLWLSSFSSVHA) form the signal peptide. Residues 417–440 (RNERQLPTPNDASDPAWSPLLNMQ) form a disordered region.

Belongs to the TolB family. As to quaternary structure, the Tol-Pal system is composed of five core proteins: the inner membrane proteins TolA, TolQ and TolR, the periplasmic protein TolB and the outer membrane protein Pal. They form a network linking the inner and outer membranes and the peptidoglycan layer.

It localises to the periplasm. In terms of biological role, part of the Tol-Pal system, which plays a role in outer membrane invagination during cell division and is important for maintaining outer membrane integrity. The protein is Tol-Pal system protein TolB of Bartonella quintana (strain Toulouse) (Rochalimaea quintana).